The sequence spans 400 residues: Forkhead box protein Q1 (400 aa).

The tract at residues 1–112 is disordered; it reads MKLEVFVPRA…EGARSKPYTR (112 aa). Over residues 32-54 the composition is skewed to low complexity; it reads LSAAGDDSLGSDGDCAANSPAAG. 2 stretches are compositionally biased toward gly residues: residues 55 to 66 and 95 to 104; these read SGAGDLEGGGGE and CAGGVGGGEG. A DNA-binding region (fork-head) is located at residues 115 to 210; the sequence is KPPYSYIALI…ADGVFRRRRK (96 aa). Residues 213 to 264 are disordered; sequence SHRTTVSASGLRPEEAPPGPAGTPQPAPAARSSPIARSPARQEERSSPASKF. Residues 228–239 show a composition bias toward pro residues; it reads APPGPAGTPQPA. Low complexity predominate over residues 240-251; it reads PAARSSPIARSP.

Expressed in kidney and stomach. Expression in the outer medulla of the kidney and the transitional epithelium. Expressed in the hair follicle medulla.

It localises to the nucleus. In terms of biological role, plays a role in hair follicle differentiation. In Mus musculus (Mouse), this protein is Forkhead box protein Q1 (Foxq1).